Reading from the N-terminus, the 521-residue chain is Aldehyde dehydrogenase, mitochondrial (521 aa).

A mitochondrion-targeting transit peptide spans 1-21 (MLRPAALAAARLVLRQGRRLL). The SIFI-degron signature appears at 13–28 (VLRQGRRLLSAAPTQA). N6-acetyllysine is present on residues K56, K77, and K163. 266-271 (GSTEVG) serves as a coordination point for NAD(+). E289 (proton acceptor) is an active-site residue. The active-site Nucleophile is the C323. N6-acetyllysine occurs at positions 372, 379, 387, 430, 432, 445, and 455.

This sequence belongs to the aldehyde dehydrogenase family. In terms of assembly, homotetramer. In terms of processing, in response to mitochondrial stress, the precursor protein is ubiquitinated by the SIFI complex in the cytoplasm before mitochondrial import, leading to its degradation. Within the SIFI complex, UBR4 initiates ubiquitin chain that are further elongated or branched by KCMF1.

Its subcellular location is the mitochondrion matrix. The catalysed reaction is an aldehyde + NAD(+) + H2O = a carboxylate + NADH + 2 H(+). Its pathway is alcohol metabolism; ethanol degradation; acetate from ethanol: step 2/2. Functionally, required for clearance of cellular formaldehyde, a cytotoxic and carcinogenic metabolite that induces DNA damage. The sequence is that of Aldehyde dehydrogenase, mitochondrial (ALDH2) from Sus scrofa (Pig).